A 152-amino-acid chain; its full sequence is Nucleoside diphosphate kinase (152 aa).

6 residues coordinate ATP: lysine 11, phenylalanine 59, arginine 87, threonine 93, arginine 104, and asparagine 114. The active-site Pros-phosphohistidine intermediate is histidine 117.

Belongs to the NDK family. As to quaternary structure, homotetramer. Mg(2+) is required as a cofactor.

It is found in the cytoplasm. It carries out the reaction dZDP + ATP = dZTP + ADP. The catalysed reaction is a 2'-deoxyribonucleoside 5'-diphosphate + ATP = a 2'-deoxyribonucleoside 5'-triphosphate + ADP. It catalyses the reaction a ribonucleoside 5'-diphosphate + ATP = a ribonucleoside 5'-triphosphate + ADP. It participates in purine metabolism. Functionally, major role in the synthesis of nucleoside triphosphates other than ATP. The ATP gamma phosphate is transferred to the NDP beta phosphate via a ping-pong mechanism, using a phosphorylated active-site intermediate. (Microbial infection) Catalyzes the phosphorylation of dZDP to dZTP, when the bacterium is infected by a phage that produces the substrate for the synthesis of dZTP (2- amino-2'-deoxyadenosine 5'-triphosphate), which is then used by the phage as a DNA polymerase substrate. This is Nucleoside diphosphate kinase from Synechococcus sp. (strain WH7803).